A 643-amino-acid chain; its full sequence is Inner kinetochore subunit cnp3 (643 aa).

Disordered regions lie at residues 55 to 209 and 224 to 386; these read SIHL…AFPD and SIKD…QSDS. Composition is skewed to low complexity over residues 85-97 and 104-125; these read AASD…SSSD and DIPS…GSSG. The span at 166–185 shows a compositional bias: basic and acidic residues; the sequence is DFSRIKASPDRKKFEPRRST. Composition is skewed to polar residues over residues 235–261, 295–304, and 313–322; these read YIQT…PSKQ, LNRSLANNSQ, and KPLQESSINS. Composition is skewed to basic residues over residues 332 to 341 and 360 to 370; these read VKRKRGRPRK and GAKKPAIRNAK. The a.T hook DNA-binding region spans 333 to 345; that stretch reads KRKRGRPRKNKLE.

It belongs to the CENP-C/MIF2 family. In terms of assembly, component of the inner kinetochore constitutive centromere-associated network (CCAN) (also known as central kinetochore Sim4 complex in fission yeast), which is composed of at least cnl2, cnp3, cnp20, fta1, fta2, fta3, fta4, fta6, fta7, mal2, mhf1, mhf2, mis6, mis15, mis17, sim4 and wip1.

The protein resides in the nucleus. It is found in the nucleoplasm. Component of the kinetochore, a multiprotein complex that assembles on centromeric DNA and attaches chromosomes to spindle microtubules, mediating chromosome segregation and sister chromatid segregation during meiosis and mitosis. Component of the inner kinetochore constitutive centromere-associated network (CCAN), which serves as a structural platform for outer kinetochore assembly. The polypeptide is Inner kinetochore subunit cnp3 (cnp3) (Schizosaccharomyces pombe (strain 972 / ATCC 24843) (Fission yeast)).